The sequence spans 1028 residues: MASSVGWQTSASAIEIAMDRIKSEHLIDNIGINFIYVFDDCNEAKAAGLSSKLLMDANVSAIVGPTCNAAGLAVVNLAGYYNTPVLTWGLTISSSFIDTSKYPTTVTIVPVAKSIAAAIHEVMIQFEWTEFVYVFVEDEKCGYFRDDLEQITSDSNYTSLSRTIQIYDQSYTNLVRQLEKLKTVSRIFTVCLPEAGDIKRRFMLAAYDLDMTTDEYVYLFAGPKSTAYQQTSSTGDVVGIWVDWSENPDGRDEEAKLAFMRTMVIVATPVQGEQYAAFKKEVIERMKLPPYNCVDECKEKEYQEAAEYADQLHDTIYLYALILNKTIEEQGIEQIANGSNIVTRGAGIEFEGMSGVVRMNGIGYRLPNMNLANLDSNATQRTVAYMDIDSTSVNWTFAIIDQALIWDAYNGKLPQTRPECGYSGKSCPVNFFVDYLYIVVIVAVIIVLCCAAAAIAAFLVIKARRDEELRLDDQWIVPHGMLQSIIKGRKESHHSSRSLQSNSTTTTGTTGISSRSVFFPETETQGYFVYMNEPVLARKYQLRVPIFKQDRSELRMLRSIEHDNVNRFIGLSIDGPVYMSFWRYCSRGSIKDVIAKSSINMDGFFIYCLIKDIASGLQYIHHSPIKQHGSLTSECCYINDRWQVKIGSYGLSFMQGVEKRTEDGLLHTAPEVLREGLTSGTQAGDVYSFSIVCSELVGHSSAWNLENRKEEADEIIFMVKRGGRTPFRPSLDDVDDDINPAMLHLIRDCWDEDPKQRPNIDMVNKLMKNMNSGRSGSANLMDHVFSVLEKHASSLEDEVQERMKELVEEKKKSDILLYRMLPQQVAERLKLGQSVEPEAFESVTIFFSDVVGFTVLANKSTPLQVVNLLNDLYTTFDAIIEKNDSYKVETIGDAYLVVSGLPRRNGTEHVANIANMSLELMDSLQAFKIPHLPQEKVQIRIGMHSGSCVAGVVGLTMPRYCLFGDTVNTASRMESNGKPGFIHLSSDCYDLLTSLYKEYNTESRGEVIIKGKGVMQTYWLLGMKEESA.

N-linked (GlcNAc...) asparagine glycosylation is found at asparagine 58, asparagine 156, asparagine 324, asparagine 337, asparagine 377, and asparagine 394. The chain crosses the membrane as a helical span at residues 438-458; sequence IVVIVAVIIVLCCAAAAIAAF. The Cytoplasmic segment spans residues 459-1028; the sequence is LVIKARRDEE…WLLGMKEESA (570 aa). The disordered stretch occupies residues 491–511; sequence ESHHSSRSLQSNSTTTTGTTG. Low complexity predominate over residues 497–511; sequence RSLQSNSTTTTGTTG. The Protein kinase domain maps to 499 to 770; the sequence is LQSNSTTTTG…DMVNKLMKNM (272 aa). Positions 786 to 817 form a coiled coil; it reads SVLEKHASSLEDEVQERMKELVEEKKKSDILL. The Guanylate cyclase domain occupies 844 to 974; the sequence is TIFFSDVVGF…DTVNTASRME (131 aa).

This sequence belongs to the adenylyl cyclase class-4/guanylyl cyclase family. Expressed bilaterally in RIM interneurons.

The protein localises to the cell membrane. It carries out the reaction GTP = 3',5'-cyclic GMP + diphosphate. Functionally, guanylate cyclase involved in the production of the second messenger cGMP. This is Receptor-type guanylate cyclase gcy-13 from Caenorhabditis elegans.